The chain runs to 455 residues: Squamosa promoter-binding-like protein 16 (455 aa).

An SBP-type zinc finger spans residues 115-192; it reads CPSCAVDGCK…DGHNRRRRKP (78 aa). Zn(2+) is bound by residues Cys-118, Cys-123, Cys-140, His-143, Cys-159, Cys-162, His-166, and Cys-178. Residues 175–191 carry the Bipartite nuclear localization signal motif; it reads KRSCRKRLDGHNRRRRK. A disordered region spans residues 182-204; the sequence is LDGHNRRRRKPQPDPMNSASYLA.

Expressed in young panicles.

The protein resides in the nucleus. Trans-acting factor that binds specifically to the consensus nucleotide sequence 5'-TNCGTACAA-3'. May be involved in panicle development. The protein is Squamosa promoter-binding-like protein 16 (SPL16) of Oryza sativa subsp. japonica (Rice).